Consider the following 376-residue polypeptide: Biotin synthase (376 aa).

In terms of domain architecture, Radical SAM core spans 68–292 (NEVQISTLLS…IAVTRICCPS (225 aa)). [4Fe-4S] cluster-binding residues include Cys-83, Cys-87, and Cys-90. Cys-129, Cys-160, Cys-220, and Arg-296 together coordinate [2Fe-2S] cluster.

Belongs to the radical SAM superfamily. Biotin synthase family. Homodimer. It depends on [4Fe-4S] cluster as a cofactor. [2Fe-2S] cluster serves as cofactor.

The enzyme catalyses (4R,5S)-dethiobiotin + (sulfur carrier)-SH + 2 reduced [2Fe-2S]-[ferredoxin] + 2 S-adenosyl-L-methionine = (sulfur carrier)-H + biotin + 2 5'-deoxyadenosine + 2 L-methionine + 2 oxidized [2Fe-2S]-[ferredoxin]. Its pathway is cofactor biosynthesis; biotin biosynthesis; biotin from 7,8-diaminononanoate: step 2/2. Catalyzes the conversion of dethiobiotin (DTB) to biotin by the insertion of a sulfur atom into dethiobiotin via a radical-based mechanism. The chain is Biotin synthase from Psychrobacter cryohalolentis (strain ATCC BAA-1226 / DSM 17306 / VKM B-2378 / K5).